Here is a 183-residue protein sequence, read N- to C-terminus: NAD(P)H-quinone oxidoreductase subunit I, chloroplastic (183 aa).

4Fe-4S ferredoxin-type domains are found at residues Gly55–Glu84 and Thr95–Glu124. Residues Cys64, Cys67, Cys70, Cys74, Cys104, Cys107, Cys110, and Cys114 each coordinate [4Fe-4S] cluster.

Belongs to the complex I 23 kDa subunit family. As to quaternary structure, NDH is composed of at least 16 different subunits, 5 of which are encoded in the nucleus. The cofactor is [4Fe-4S] cluster.

Its subcellular location is the plastid. It is found in the chloroplast thylakoid membrane. It carries out the reaction a plastoquinone + NADH + (n+1) H(+)(in) = a plastoquinol + NAD(+) + n H(+)(out). It catalyses the reaction a plastoquinone + NADPH + (n+1) H(+)(in) = a plastoquinol + NADP(+) + n H(+)(out). Functionally, NDH shuttles electrons from NAD(P)H:plastoquinone, via FMN and iron-sulfur (Fe-S) centers, to quinones in the photosynthetic chain and possibly in a chloroplast respiratory chain. The immediate electron acceptor for the enzyme in this species is believed to be plastoquinone. Couples the redox reaction to proton translocation, and thus conserves the redox energy in a proton gradient. The sequence is that of NAD(P)H-quinone oxidoreductase subunit I, chloroplastic from Huperzia lucidula (Shining clubmoss).